A 227-amino-acid polypeptide reads, in one-letter code: Cytochrome c oxidase subunit 2 (227 aa).

Residues 1–14 (MAYPMQLGLQDATS) lie on the Mitochondrial intermembrane side of the membrane. Residues 15-45 (PIMEELMNFHDHTLMIVFLISSLVLYLISLM) traverse the membrane as a helical segment. The Mitochondrial matrix portion of the chain corresponds to 46-59 (LTTKLIHTNTMDAQ). Residues 60–87 (EVETIWTILPAIILVLIALPSLRILYMM) form a helical membrane-spanning segment. Residues 88 to 227 (DEINNPVLTV…FFENWSSSMT (140 aa)) are Mitochondrial intermembrane-facing. Positions 161, 196, 198, 200, 204, and 207 each coordinate Cu cation. Glutamate 198 contacts Mg(2+).

The protein belongs to the cytochrome c oxidase subunit 2 family. Component of the cytochrome c oxidase (complex IV, CIV), a multisubunit enzyme composed of 14 subunits. The complex is composed of a catalytic core of 3 subunits MT-CO1, MT-CO2 and MT-CO3, encoded in the mitochondrial DNA, and 11 supernumerary subunits COX4I, COX5A, COX5B, COX6A, COX6B, COX6C, COX7A, COX7B, COX7C, COX8 and NDUFA4, which are encoded in the nuclear genome. The complex exists as a monomer or a dimer and forms supercomplexes (SCs) in the inner mitochondrial membrane with NADH-ubiquinone oxidoreductase (complex I, CI) and ubiquinol-cytochrome c oxidoreductase (cytochrome b-c1 complex, complex III, CIII), resulting in different assemblies (supercomplex SCI(1)III(2)IV(1) and megacomplex MCI(2)III(2)IV(2)). Found in a complex with TMEM177, COA6, COX18, COX20, SCO1 and SCO2. Interacts with TMEM177 in a COX20-dependent manner. Interacts with COX20. Interacts with COX16. Cu cation is required as a cofactor.

The protein resides in the mitochondrion inner membrane. It catalyses the reaction 4 Fe(II)-[cytochrome c] + O2 + 8 H(+)(in) = 4 Fe(III)-[cytochrome c] + 2 H2O + 4 H(+)(out). Its function is as follows. Component of the cytochrome c oxidase, the last enzyme in the mitochondrial electron transport chain which drives oxidative phosphorylation. The respiratory chain contains 3 multisubunit complexes succinate dehydrogenase (complex II, CII), ubiquinol-cytochrome c oxidoreductase (cytochrome b-c1 complex, complex III, CIII) and cytochrome c oxidase (complex IV, CIV), that cooperate to transfer electrons derived from NADH and succinate to molecular oxygen, creating an electrochemical gradient over the inner membrane that drives transmembrane transport and the ATP synthase. Cytochrome c oxidase is the component of the respiratory chain that catalyzes the reduction of oxygen to water. Electrons originating from reduced cytochrome c in the intermembrane space (IMS) are transferred via the dinuclear copper A center (CU(A)) of subunit 2 and heme A of subunit 1 to the active site in subunit 1, a binuclear center (BNC) formed by heme A3 and copper B (CU(B)). The BNC reduces molecular oxygen to 2 water molecules using 4 electrons from cytochrome c in the IMS and 4 protons from the mitochondrial matrix. The chain is Cytochrome c oxidase subunit 2 (MT-CO2) from Desmodillus auricularis (Cape short-eared gerbil).